The primary structure comprises 166 residues: 3-isopropylmalate dehydratase small subunit (166 aa).

This sequence belongs to the LeuD family. LeuD type 2 subfamily. As to quaternary structure, heterodimer of LeuC and LeuD.

The enzyme catalyses (2R,3S)-3-isopropylmalate = (2S)-2-isopropylmalate. It functions in the pathway amino-acid biosynthesis; L-leucine biosynthesis; L-leucine from 3-methyl-2-oxobutanoate: step 2/4. Catalyzes the isomerization between 2-isopropylmalate and 3-isopropylmalate, via the formation of 2-isopropylmaleate. This Moorella thermoacetica (strain ATCC 39073 / JCM 9320) protein is 3-isopropylmalate dehydratase small subunit.